The following is a 192-amino-acid chain: Peptidyl-tRNA hydrolase (192 aa).

Residue tyrosine 17 participates in tRNA binding. Histidine 22 serves as the catalytic Proton acceptor. TRNA contacts are provided by phenylalanine 68, asparagine 70, and asparagine 116.

Belongs to the PTH family. Monomer.

The protein localises to the cytoplasm. It catalyses the reaction an N-acyl-L-alpha-aminoacyl-tRNA + H2O = an N-acyl-L-amino acid + a tRNA + H(+). Functionally, hydrolyzes ribosome-free peptidyl-tRNAs (with 1 or more amino acids incorporated), which drop off the ribosome during protein synthesis, or as a result of ribosome stalling. In terms of biological role, catalyzes the release of premature peptidyl moieties from peptidyl-tRNA molecules trapped in stalled 50S ribosomal subunits, and thus maintains levels of free tRNAs and 50S ribosomes. The protein is Peptidyl-tRNA hydrolase of Xylella fastidiosa (strain Temecula1 / ATCC 700964).